The chain runs to 304 residues: Glutaminase (304 aa).

Residues serine 63, asparagine 114, glutamate 158, asparagine 165, tyrosine 189, tyrosine 240, and valine 258 each contribute to the substrate site.

Belongs to the glutaminase family. Homotetramer.

It catalyses the reaction L-glutamine + H2O = L-glutamate + NH4(+). This chain is Glutaminase, found in Shewanella baltica (strain OS155 / ATCC BAA-1091).